A 199-amino-acid chain; its full sequence is Charged multivesicular body protein 1b (199 aa).

The stretch at 26 to 48 (DKEEKAEKAKIKKAIQKGNMEVA) forms a coiled coil. The segment at 132–156 (MEDTMSSTTTLTTPQGQVDMLLQEM) is interaction with IST1. Positions 167–199 (ELPQGQTGSVGTSVASAEQDELSQRLARLRDQV) are disordered. Residues 170–182 (QGQTGSVGTSVAS) show a composition bias toward polar residues. The interaction with SPAST stretch occupies residues 174-199 (GSVGTSVASAEQDELSQRLARLRDQV). Residues 178–199 (TSVASAEQDELSQRLARLRDQV) adopt a coiled-coil conformation. Residues 180–196 (VASAEQDELSQRLARLR) are interaction with VPS4A, MITD1 and STAMBP. The interaction with VTA1 stretch occupies residues 180-199 (VASAEQDELSQRLARLRDQV). The interaction with VPS4B stretch occupies residues 183-199 (AEQDELSQRLARLRDQV). An MIT-interacting motif motif is present at residues 186-196 (DELSQRLARLR).

Belongs to the SNF7 family. Probable peripherally associated component of the endosomal sorting required for transport complex III (ESCRT-III). ESCRT-III components are thought to multimerize to form a flat lattice on the perimeter membrane of the endosome. Several assembly forms of ESCRT-III may exist that interact and act sequentially. Interacts with CHMP1A. Interacts with VTA1; the interaction probably involves the open conformation of CHMP1B. Interacts with CHMP2A. Interacts with VPS4A; the interaction is direct. Interacts with VPS4B; the interaction is direct. Interacts with SPAST (via MIT domain); the interaction is direct. Interacts with IST1. Interacts with MITD1. Interacts with STAMBP.

Its subcellular location is the cytoplasm. The protein resides in the cytosol. The protein localises to the endosome. It is found in the late endosome membrane. Functionally, probable peripherally associated component of the endosomal sorting required for transport complex III (ESCRT-III) which is involved in multivesicular bodies (MVBs) formation and sorting of endosomal cargo proteins into MVBs. MVBs contain intraluminal vesicles (ILVs) that are generated by invagination and scission from the limiting membrane of the endosome and mostly are delivered to lysosomes enabling degradation of membrane proteins, such as stimulated growth factor receptors, lysosomal enzymes and lipids. The MVB pathway appears to require the sequential function of ESCRT-O, -I,-II and -III complexes. ESCRT-III proteins mostly dissociate from the invaginating membrane before the ILV is released. The ESCRT machinery also functions in topologically equivalent membrane fission events, such as the terminal stages of cytokinesis and the budding of enveloped viruses (lentiviruses). ESCRT-III proteins are believed to mediate the necessary vesicle extrusion and/or membrane fission activities, possibly in conjunction with the AAA ATPase VPS4. Involved in cytokinesis. Involved in recruiting VPS4A and/or VPS4B and SPAST to the midbody of dividing cells. The polypeptide is Charged multivesicular body protein 1b (CHMP1B) (Bos taurus (Bovine)).